A 348-amino-acid polypeptide reads, in one-letter code: Protein pelota homolog (348 aa).

It belongs to the eukaryotic release factor 1 family. Pelota subfamily. As to quaternary structure, monomer. The cofactor is a divalent metal cation.

Its subcellular location is the cytoplasm. Functionally, may function in recognizing stalled ribosomes, interact with stem-loop structures in stalled mRNA molecules, and effect endonucleolytic cleavage of the mRNA. May play a role in the release non-functional ribosomes and degradation of damaged mRNAs. Has endoribonuclease activity. The protein is Protein pelota homolog of Methanococcus maripaludis (strain C5 / ATCC BAA-1333).